Reading from the N-terminus, the 725-residue chain is Prolyl 3-hydroxylase 1 (725 aa).

Positions methionine 1 to alanine 14 are cleaved as a signal peptide. A TPR 1 repeat occupies proline 36 to isoleucine 69. An N-linked (GlcNAc...) asparagine glycan is attached at asparagine 82. 3 TPR repeats span residues arginine 136–histidine 169, histidine 198–alanine 231, and proline 294–aspartate 327. The stretch at lysine 394–glutamate 441 forms a coiled coil. N-linked (GlcNAc...) asparagine glycosylation is found at asparagine 460 and asparagine 533. The 115-residue stretch at serine 557–leucine 671 folds into the Fe2OG dioxygenase domain. Positions 580, 582, and 652 each coordinate Fe cation. Arginine 662 is an active-site residue. The span at glutamate 701–alanine 715 shows a compositional bias: polar residues. The disordered stretch occupies residues glutamate 701–leucine 725. Positions lysine 722 to leucine 725 match the Prevents secretion from ER motif.

The protein belongs to the leprecan family. In terms of assembly, binds unfolded collagen in a complex with CYPB and CRTAP. The cofactor is Fe cation. Requires L-ascorbate as cofactor. In terms of tissue distribution, expressed in embryonic dermis, tendon, cartilage, liver and kidney. Expression in the kidney is restricted to the calyx. In the liver, expression is restricted to the interlobular septum.

It is found in the endoplasmic reticulum. The catalysed reaction is L-prolyl-[collagen] + 2-oxoglutarate + O2 = trans-3-hydroxy-L-prolyl-[collagen] + succinate + CO2. Functionally, has prolyl 3-hydroxylase activity catalyzing the post-translational formation of 3-hydroxyproline in -Xaa-Pro-Gly-sequences in collagens, especially types IV and V. May be involved in the secretoty pathway of cells. Has growth suppressive activity in fibroblasts. The sequence is that of Prolyl 3-hydroxylase 1 from Gallus gallus (Chicken).